A 1527-amino-acid polypeptide reads, in one-letter code: Rho guanine nucleotide exchange factor 11 (1527 aa).

A disordered region spans residues 1 to 56; that stretch reads MSIRLPHSIDRSASKKQSHLSSPIASWLSSLSSLGDSTPERTSPSHHRQPSDTSET. A phosphoserine mark is found at S2, S30, S32, and S51. Residues 19–37 show a composition bias toward low complexity; the sequence is HLSSPIASWLSSLSSLGDS. The region spanning 64 to 143 is the PDZ domain; it reads CVIIQKDQHG…LTLLGSSPPS (80 aa). The disordered stretch occupies residues 216 to 247; it reads PCGETSQRTCEGRLSVDSQEADSGLDSGTERF. 2 positions are modified to phosphoserine: S262 and S268. A Phosphothreonine modification is found at T271. Phosphoserine occurs at positions 272 and 288. Residues 323–503 enclose the RGSL domain; sequence ESDIIFQDLE…NTFMSHAGIR (181 aa). A coiled-coil region spans residues 461–487; that stretch reads LRERQMAEKQLAALGDILSKYEEDRSA. Disordered stretches follow at residues 506-569 and 582-687; these read ESRS…QSIK and NSHQ…GRRS. The segment covering 509–519 has biased composition (polar residues); it reads SSCTAEKTQSA. 2 stretches are compositionally biased toward basic and acidic residues: residues 539–551 and 624–645; these read SKKE…DKKR and KGRE…RSDV. Residues S643 and S671 each carry the phosphoserine modification. Over residues 656–672 the composition is skewed to low complexity; the sequence is LHQSASSSASSLSTRSL. Phosphothreonine occurs at positions 676 and 680. The DH domain maps to 742–931; it reads DRQEVINELF…REILKFVNEA (190 aa). A PH domain is found at 973–1087; the sequence is KMIHEGPLTW…WMELLEEAVQ (115 aa). Disordered regions lie at residues 1090–1184, 1231–1321, and 1379–1411; these read TKHP…NRGI, QAAG…TEPA, and AGPL…PQPY. Residues 1126–1138 are compositionally biased toward basic and acidic residues; that stretch reads EVYHTEKEPKKLP. Residues 1242-1251 show a composition bias toward polar residues; it reads PTPSVVSITS. S1299 and S1304 each carry phosphoserine. Low complexity predominate over residues 1312–1321; the sequence is AAEAASTEPA. Phosphoserine is present on residues S1462 and S1463. A phosphothreonine mark is found at T1467 and T1480. Residues 1480–1527 are disordered; it reads TDYSLSPPAKEALASDSQNGQEQGSCPEEGSDIALEDSATDTAVSPGP. S1485 is modified (phosphoserine). Residues 1494–1503 are compositionally biased toward polar residues; the sequence is SDSQNGQEQG. Acidic residues predominate over residues 1508–1518; sequence EGSDIALEDSA.

As to quaternary structure, interacts with RHOA, GNA13 and SLC1A6. Interacts with GNA12, PLXNB1 and PLXNB2. Interacts (via DH domain) with GCSAM (via C-terminus). Found in a complex with ARHGEF11 and ARHGEF12; binding to ARHGEF11 and ARHGEF12 enhances CDC42 GEF activity of PLEKHG4B, and PLEKHG4B, in turn, inhibits ARHGEF11- and ARHGEF12-mediated RHOA activation. Phosphorylated by MAP kinase p38 (MAPK11, MAPK12, MAPK13 and/or MAPK14). Post-translationally, ubiquitinated by the BCR(KLHL20) E3 ubiquitin ligase complex when previously phosphorylated by MAP kinase p38 (MAPK11, MAPK12, MAPK13 and/or MAPK14), leading to its degradation, thereby restricting RhoA activity and facilitating growth cone spreading and neurite outgrowth.

It localises to the cytoplasm. The protein localises to the membrane. May play a role in the regulation of RhoA GTPase by guanine nucleotide-binding alpha-12 (GNA12) and alpha-13 (GNA13). Acts as guanine nucleotide exchange factor (GEF) for RhoA GTPase and may act as GTPase-activating protein (GAP) for GNA12 and GNA13. Involved in neurotrophin-induced neurite outgrowth. The sequence is that of Rho guanine nucleotide exchange factor 11 (Arhgef11) from Rattus norvegicus (Rat).